The primary structure comprises 471 residues: Probable ribonuclease FAU-1 (471 aa).

It belongs to the FAU-1 family.

In terms of biological role, probable RNase involved in rRNA stability through maturation and/or degradation of precursor rRNAs. Binds to RNA in loop regions with AU-rich sequences. This is Probable ribonuclease FAU-1 from Aeropyrum pernix (strain ATCC 700893 / DSM 11879 / JCM 9820 / NBRC 100138 / K1).